Reading from the N-terminus, the 95-residue chain is Trypomastigote decay-accelerating factor (95 aa).

The protein belongs to the receptors of complement activation (RCA) family.

Interferes with the efficient assembly of the host C3 convertase. Could protect parasites from complement-mediated lysis by sera from a number of different species. The sequence is that of Trypomastigote decay-accelerating factor from Trypanosoma cruzi.